Here is a 353-residue protein sequence, read N- to C-terminus: Photosystem II D2 protein (353 aa).

At T2 the chain carries N-acetylthreonine. T2 is modified (phosphothreonine). Residues 41 to 61 form a helical membrane-spanning segment; it reads TAYFALGGWFTGTTFVTSWYT. H118 lines the chlorophyll a pocket. The helical transmembrane segment at 125–141 threads the bilayer; it reads GFMLRQFELARSVQLRP. Pheophytin a contacts are provided by Q130 and N143. A helical transmembrane segment spans residues 153 to 166; it reads VFVSVFLIYPLGQS. A chlorophyll a-binding site is contributed by H198. Residues 208 to 228 traverse the membrane as a helical segment; the sequence is AALLCAIHGATVENTLFEDGD. Residues H215 and F262 each coordinate a plastoquinone. H215 is a Fe cation binding site. Position 269 (H269) interacts with Fe cation. The helical transmembrane segment at 279-295 threads the bilayer; sequence GLWMSAIGVVGLALNLR.

It belongs to the reaction center PufL/M/PsbA/D family. In terms of assembly, PSII is composed of 1 copy each of membrane proteins PsbA, PsbB, PsbC, PsbD, PsbE, PsbF, PsbH, PsbI, PsbJ, PsbK, PsbL, PsbM, PsbT, PsbX, PsbY, PsbZ, Psb30/Ycf12, at least 3 peripheral proteins of the oxygen-evolving complex and a large number of cofactors. It forms dimeric complexes. It depends on The D1/D2 heterodimer binds P680, chlorophylls that are the primary electron donor of PSII, and subsequent electron acceptors. It shares a non-heme iron and each subunit binds pheophytin, quinone, additional chlorophylls, carotenoids and lipids. There is also a Cl(-1) ion associated with D1 and D2, which is required for oxygen evolution. The PSII complex binds additional chlorophylls, carotenoids and specific lipids. as a cofactor.

It is found in the plastid. The protein resides in the chloroplast thylakoid membrane. The enzyme catalyses 2 a plastoquinone + 4 hnu + 2 H2O = 2 a plastoquinol + O2. In terms of biological role, photosystem II (PSII) is a light-driven water:plastoquinone oxidoreductase that uses light energy to abstract electrons from H(2)O, generating O(2) and a proton gradient subsequently used for ATP formation. It consists of a core antenna complex that captures photons, and an electron transfer chain that converts photonic excitation into a charge separation. The D1/D2 (PsbA/PsbD) reaction center heterodimer binds P680, the primary electron donor of PSII as well as several subsequent electron acceptors. D2 is needed for assembly of a stable PSII complex. The sequence is that of Photosystem II D2 protein from Adiantum capillus-veneris (Maidenhair fern).